A 1386-amino-acid polypeptide reads, in one-letter code: DNA-directed RNA polymerase subunit beta (1386 aa).

Belongs to the RNA polymerase beta chain family. The RNAP catalytic core consists of 2 alpha, 1 beta, 1 beta' and 1 omega subunit. When a sigma factor is associated with the core the holoenzyme is formed, which can initiate transcription.

The catalysed reaction is RNA(n) + a ribonucleoside 5'-triphosphate = RNA(n+1) + diphosphate. Its function is as follows. DNA-dependent RNA polymerase catalyzes the transcription of DNA into RNA using the four ribonucleoside triphosphates as substrates. The sequence is that of DNA-directed RNA polymerase subunit beta from Nitratiruptor sp. (strain SB155-2).